The sequence spans 159 residues: ATP synthase subunit b 2 (159 aa).

A helical membrane pass occupies residues 1–21; that stretch reads MDATFWAFIALVIFVAIVVYM.

Belongs to the ATPase B chain family. As to quaternary structure, F-type ATPases have 2 components, F(1) - the catalytic core - and F(0) - the membrane proton channel. F(1) has five subunits: alpha(3), beta(3), gamma(1), delta(1), epsilon(1). F(0) has three main subunits: a(1), b(2) and c(10-14). The alpha and beta chains form an alternating ring which encloses part of the gamma chain. F(1) is attached to F(0) by a central stalk formed by the gamma and epsilon chains, while a peripheral stalk is formed by the delta and b chains.

Its subcellular location is the cell inner membrane. Its function is as follows. F(1)F(0) ATP synthase produces ATP from ADP in the presence of a proton or sodium gradient. F-type ATPases consist of two structural domains, F(1) containing the extramembraneous catalytic core and F(0) containing the membrane proton channel, linked together by a central stalk and a peripheral stalk. During catalysis, ATP synthesis in the catalytic domain of F(1) is coupled via a rotary mechanism of the central stalk subunits to proton translocation. In terms of biological role, component of the F(0) channel, it forms part of the peripheral stalk, linking F(1) to F(0). In Brucella abortus (strain S19), this protein is ATP synthase subunit b 2.